Here is a 382-residue protein sequence, read N- to C-terminus: Succinate--CoA ligase [ADP-forming] subunit beta (382 aa).

The region spanning 9 to 237 (KQVFADAGIP…AAEGDELEQK (229 aa)) is the ATP-grasp domain. ATP contacts are provided by residues lysine 45, 52 to 54 (GRG), glutamate 91, valine 94, and glutamate 99. Positions 191 and 205 each coordinate Mg(2+). Substrate-binding positions include asparagine 257 and 314-316 (GIT).

The protein belongs to the succinate/malate CoA ligase beta subunit family. Heterotetramer of two alpha and two beta subunits. Requires Mg(2+) as cofactor.

It catalyses the reaction succinate + ATP + CoA = succinyl-CoA + ADP + phosphate. The catalysed reaction is GTP + succinate + CoA = succinyl-CoA + GDP + phosphate. The protein operates within carbohydrate metabolism; tricarboxylic acid cycle; succinate from succinyl-CoA (ligase route): step 1/1. Its function is as follows. Succinyl-CoA synthetase functions in the citric acid cycle (TCA), coupling the hydrolysis of succinyl-CoA to the synthesis of either ATP or GTP and thus represents the only step of substrate-level phosphorylation in the TCA. The beta subunit provides nucleotide specificity of the enzyme and binds the substrate succinate, while the binding sites for coenzyme A and phosphate are found in the alpha subunit. The sequence is that of Succinate--CoA ligase [ADP-forming] subunit beta from Haloarcula marismortui (strain ATCC 43049 / DSM 3752 / JCM 8966 / VKM B-1809) (Halobacterium marismortui).